The chain runs to 392 residues: Homoserine O-acetyltransferase (392 aa).

The AB hydrolase-1 domain maps to 52 to 356; the sequence is NVVVVLHALT…ICGHDGFLVE (305 aa). S157 acts as the Nucleophile in catalysis. Residue R227 coordinates substrate. Residues D320 and H350 contribute to the active site. Residue D351 participates in substrate binding. A disordered region spans residues 373 to 392; it reads SQSAGPGGAGPGSRKGTTRR.

Belongs to the AB hydrolase superfamily. MetX family. As to quaternary structure, homodimer.

Its subcellular location is the cytoplasm. The enzyme catalyses L-homoserine + acetyl-CoA = O-acetyl-L-homoserine + CoA. The protein operates within amino-acid biosynthesis; L-methionine biosynthesis via de novo pathway; O-acetyl-L-homoserine from L-homoserine: step 1/1. In terms of biological role, transfers an acetyl group from acetyl-CoA to L-homoserine, forming acetyl-L-homoserine. In Mycobacterium avium (strain 104), this protein is Homoserine O-acetyltransferase.